The chain runs to 319 residues: Acetyl-coenzyme A carboxylase carboxyl transferase subunit alpha (319 aa).

Residues 35–296 (NLDEEVQRLR…KAQLLADLAD (262 aa)) enclose the CoA carboxyltransferase C-terminal domain.

Belongs to the AccA family. In terms of assembly, acetyl-CoA carboxylase is a heterohexamer composed of biotin carboxyl carrier protein (AccB), biotin carboxylase (AccC) and two subunits each of ACCase subunit alpha (AccA) and ACCase subunit beta (AccD).

It localises to the cytoplasm. The enzyme catalyses N(6)-carboxybiotinyl-L-lysyl-[protein] + acetyl-CoA = N(6)-biotinyl-L-lysyl-[protein] + malonyl-CoA. It functions in the pathway lipid metabolism; malonyl-CoA biosynthesis; malonyl-CoA from acetyl-CoA: step 1/1. In terms of biological role, component of the acetyl coenzyme A carboxylase (ACC) complex. First, biotin carboxylase catalyzes the carboxylation of biotin on its carrier protein (BCCP) and then the CO(2) group is transferred by the carboxyltransferase to acetyl-CoA to form malonyl-CoA. This is Acetyl-coenzyme A carboxylase carboxyl transferase subunit alpha from Erwinia tasmaniensis (strain DSM 17950 / CFBP 7177 / CIP 109463 / NCPPB 4357 / Et1/99).